We begin with the raw amino-acid sequence, 312 residues long: 4-hydroxy-3-methylbut-2-enyl diphosphate reductase (312 aa).

Cys14 is a [4Fe-4S] cluster binding site. The (2E)-4-hydroxy-3-methylbut-2-enyl diphosphate site is built by His43 and His76. Dimethylallyl diphosphate contacts are provided by His43 and His76. His43 and His76 together coordinate isopentenyl diphosphate. Cys98 serves as a coordination point for [4Fe-4S] cluster. His125 is a binding site for (2E)-4-hydroxy-3-methylbut-2-enyl diphosphate. His125 is a dimethylallyl diphosphate binding site. His125 serves as a coordination point for isopentenyl diphosphate. Glu127 serves as the catalytic Proton donor. Thr165 contacts (2E)-4-hydroxy-3-methylbut-2-enyl diphosphate. Residue Cys195 coordinates [4Fe-4S] cluster. Residues Ser223, Ser224, Asn225, and Ser269 each coordinate (2E)-4-hydroxy-3-methylbut-2-enyl diphosphate. Positions 223, 224, 225, and 269 each coordinate dimethylallyl diphosphate. Isopentenyl diphosphate is bound by residues Ser223, Ser224, Asn225, and Ser269.

Belongs to the IspH family. It depends on [4Fe-4S] cluster as a cofactor.

The enzyme catalyses isopentenyl diphosphate + 2 oxidized [2Fe-2S]-[ferredoxin] + H2O = (2E)-4-hydroxy-3-methylbut-2-enyl diphosphate + 2 reduced [2Fe-2S]-[ferredoxin] + 2 H(+). It carries out the reaction dimethylallyl diphosphate + 2 oxidized [2Fe-2S]-[ferredoxin] + H2O = (2E)-4-hydroxy-3-methylbut-2-enyl diphosphate + 2 reduced [2Fe-2S]-[ferredoxin] + 2 H(+). It participates in isoprenoid biosynthesis; dimethylallyl diphosphate biosynthesis; dimethylallyl diphosphate from (2E)-4-hydroxy-3-methylbutenyl diphosphate: step 1/1. Its pathway is isoprenoid biosynthesis; isopentenyl diphosphate biosynthesis via DXP pathway; isopentenyl diphosphate from 1-deoxy-D-xylulose 5-phosphate: step 6/6. In terms of biological role, catalyzes the conversion of 1-hydroxy-2-methyl-2-(E)-butenyl 4-diphosphate (HMBPP) into a mixture of isopentenyl diphosphate (IPP) and dimethylallyl diphosphate (DMAPP). Acts in the terminal step of the DOXP/MEP pathway for isoprenoid precursor biosynthesis. The sequence is that of 4-hydroxy-3-methylbut-2-enyl diphosphate reductase from Leptospira interrogans serogroup Icterohaemorrhagiae serovar copenhageni (strain Fiocruz L1-130).